The following is a 127-amino-acid chain: Aspartate 1-decarboxylase (127 aa).

The active-site Schiff-base intermediate with substrate; via pyruvic acid is the S25. Residue S25 is modified to Pyruvic acid (Ser). T57 contacts substrate. The active-site Proton donor is Y58. 73–75 (GAA) is a binding site for substrate.

It belongs to the PanD family. In terms of assembly, heterooctamer of four alpha and four beta subunits. The cofactor is pyruvate. In terms of processing, is synthesized initially as an inactive proenzyme, which is activated by self-cleavage at a specific serine bond to produce a beta-subunit with a hydroxyl group at its C-terminus and an alpha-subunit with a pyruvoyl group at its N-terminus.

It localises to the cytoplasm. It catalyses the reaction L-aspartate + H(+) = beta-alanine + CO2. Its pathway is cofactor biosynthesis; (R)-pantothenate biosynthesis; beta-alanine from L-aspartate: step 1/1. In terms of biological role, catalyzes the pyruvoyl-dependent decarboxylation of aspartate to produce beta-alanine. In Bacillus cereus (strain 03BB102), this protein is Aspartate 1-decarboxylase.